The primary structure comprises 444 residues: Porin AaxA (444 aa).

The signal sequence occupies residues 1 to 19 (MAFSRFYLLTALYTGGILA). Positions 42–68 (KNSTQDSDSSPSESSPHPRQEPRRHVL) are disordered. A compositionally biased stretch (low complexity) spans 46–56 (QDSDSSPSESS).

It belongs to the OprB family.

The protein resides in the cell outer membrane. In terms of biological role, facilitates L-arginine uptake, as part of the AaxABC system. The arginine uptake by the bacterium in the macrophage may be a virulence factor against the host innate immune response. The protein is Porin AaxA (aaxA) of Chlamydia felis (strain Fe/C-56) (Chlamydophila felis).